Here is a 204-residue protein sequence, read N- to C-terminus: Superoxide dismutase [Mn] (204 aa).

Residue His-27 coordinates Mn(2+). 2 positions are modified to phosphothreonine: Thr-34 and Thr-70. The Mn(2+) site is built by His-82, Asp-164, and His-168.

The protein belongs to the iron/manganese superoxide dismutase family. In terms of assembly, homodimer. Requires Mn(2+) as cofactor.

It catalyses the reaction 2 superoxide + 2 H(+) = H2O2 + O2. Functionally, destroys superoxide anion radicals which are normally produced within the cells and which are toxic to biological systems. This Geobacillus stearothermophilus (Bacillus stearothermophilus) protein is Superoxide dismutase [Mn] (sodA).